A 284-amino-acid chain; its full sequence is Tropomyosin beta chain (284 aa).

N-acetylmethionine is present on Met-1. The segment at 1–78 (MDAIKKKMQM…EKLEQAEKKA (78 aa)) is disordered. Positions 1–284 (MDAIKKKMQM…DNALNDITSL (284 aa)) form a coiled coil. Composition is skewed to basic and acidic residues over residues 12–40 (KLDK…KQLE) and 51–78 (KGTE…EKKA). Position 53 is a phosphothreonine (Thr-53). A Phosphoserine; by PIK3CG modification is found at Ser-61. Thr-79 bears the Phosphothreonine mark. A Phosphoserine modification is found at Ser-87. Thr-108 is subject to Phosphothreonine. The tract at residues 117 to 136 (EKAADESERGMKVIENRAMK) is disordered. Ser-158, Ser-206, and Ser-215 each carry phosphoserine. The residue at position 252 (Thr-252) is a Phosphothreonine. Position 261 is a phosphotyrosine (Tyr-261). At Ser-271 the chain carries Phosphoserine. Thr-282 is subject to Phosphothreonine. Ser-283 carries the post-translational modification Phosphoserine.

Belongs to the tropomyosin family. In terms of assembly, homodimer. Heterodimer of an alpha (TPM1, TPM3 or TPM4) and a beta (TPM2) chain. Post-translationally, phosphorylated on Ser-61 by PIK3CG. Phosphorylation on Ser-61 is required for ADRB2 internalization.

It localises to the cytoplasm. Its subcellular location is the cytoskeleton. In terms of biological role, binds to actin filaments in muscle and non-muscle cells. Plays a central role, in association with the troponin complex, in the calcium dependent regulation of vertebrate striated muscle contraction. Smooth muscle contraction is regulated by interaction with caldesmon. In non-muscle cells is implicated in stabilizing cytoskeleton actin filaments. The non-muscle isoform may have a role in agonist-mediated receptor internalization. The chain is Tropomyosin beta chain (Tpm2) from Mus musculus (Mouse).